A 132-amino-acid polypeptide reads, in one-letter code: uncharacterized protein (132 aa).

2 helical membrane passes run 12–32 and 37–57; these read VIGF…KKLY and LTLA…IPVL.

It is found in the cell membrane. This is an uncharacterized protein from Methanocaldococcus jannaschii (strain ATCC 43067 / DSM 2661 / JAL-1 / JCM 10045 / NBRC 100440) (Methanococcus jannaschii).